The chain runs to 438 residues: Transmembrane protein 184C (438 aa).

A run of 7 helical transmembrane segments spans residues 17–37 (LVAV…VWEL), 48–68 (AWFI…WVIL), 86–106 (ILWM…YPGI), 179–199 (YTVV…LGIY), 212–232 (YLVI…LLFY), 254–274 (VVFV…VGVI), and 287–307 (AVAT…AAIA). Residues 355-438 (RGHPRKKLFP…KEPSDKSVDS (84 aa)) are disordered. Composition is skewed to low complexity over residues 374 to 390 (SLLS…ASSM) and 404 to 413 (TVTPQTTPTT). Serine 422 is subject to Phosphoserine. The span at 425–438 (IGEKKEPSDKSVDS) shows a compositional bias: basic and acidic residues.

The protein belongs to the TMEM184 family. Widely expressed with higher expression in lung, kidney, spleen, pancreas, thymus, prostate, testis, ovary, small intestine and thyroid.

The protein localises to the membrane. Functionally, possible tumor suppressor which may play a role in cell growth. In Homo sapiens (Human), this protein is Transmembrane protein 184C (TMEM184C).